The following is a 353-amino-acid chain: MTATLERRESASLWGRFCDWITSTENRLYIGWFGVLMIPTLLTATSVFIIAFVAAPPVDIDGIREPVSGSLLYGNNIISGAIIPTSAAIGLHFYPIWEAASVDEWLYNGGPYELIVLHFLLGVACYMGREWELSFRLGMRPWIAVAYSAPVAAAAAVFLIYPIGQGSFSDGMPLGISGTFNFMIVFQAEHNILMHPFHMLGVAGVFGGSLFSAMHGSLVTSSLIRETTENESANAGYKFGQEEETYNIVAAHGYFGRLIFQYASFNNSRSLHFFLAAWPVVGIWFTALGISTMAFNLNGFNFNQSVVDSQGRVINTWADIINRANLGMEVMHERNAHNFPLDLASVDAPSING.

At Thr-2 the chain carries N-acetylthreonine. Thr-2 is subject to Phosphothreonine. Transmembrane regions (helical) follow at residues Tyr-29 to Ser-46, His-118 to Leu-133, and Trp-142 to Ala-156. His-118 lines the chlorophyll a pocket. Pheophytin a is bound at residue Tyr-126. [CaMn4O5] cluster-binding residues include Asp-170 and Glu-189. The helical transmembrane segment at Phe-197–Leu-218 threads the bilayer. Position 198 (His-198) interacts with chlorophyll a. A quinone is bound by residues His-215 and Ser-264–Phe-265. Position 215 (His-215) interacts with Fe cation. His-272 serves as a coordination point for Fe cation. The helical transmembrane segment at Phe-274–Leu-288 threads the bilayer. 4 residues coordinate [CaMn4O5] cluster: His-332, Glu-333, Asp-342, and Ala-344. The propeptide occupies Ser-345–Gly-353.

Belongs to the reaction center PufL/M/PsbA/D family. PSII is composed of 1 copy each of membrane proteins PsbA, PsbB, PsbC, PsbD, PsbE, PsbF, PsbH, PsbI, PsbJ, PsbK, PsbL, PsbM, PsbT, PsbX, PsbY, PsbZ, Psb30/Ycf12, at least 3 peripheral proteins of the oxygen-evolving complex and a large number of cofactors. It forms dimeric complexes. It depends on The D1/D2 heterodimer binds P680, chlorophylls that are the primary electron donor of PSII, and subsequent electron acceptors. It shares a non-heme iron and each subunit binds pheophytin, quinone, additional chlorophylls, carotenoids and lipids. D1 provides most of the ligands for the Mn4-Ca-O5 cluster of the oxygen-evolving complex (OEC). There is also a Cl(-1) ion associated with D1 and D2, which is required for oxygen evolution. The PSII complex binds additional chlorophylls, carotenoids and specific lipids. as a cofactor. Post-translationally, tyr-161 forms a radical intermediate that is referred to as redox-active TyrZ, YZ or Y-Z. In terms of processing, C-terminally processed by CTPA; processing is essential to allow assembly of the oxygen-evolving complex and thus photosynthetic growth.

It localises to the plastid. Its subcellular location is the chloroplast thylakoid membrane. It carries out the reaction 2 a plastoquinone + 4 hnu + 2 H2O = 2 a plastoquinol + O2. Functionally, photosystem II (PSII) is a light-driven water:plastoquinone oxidoreductase that uses light energy to abstract electrons from H(2)O, generating O(2) and a proton gradient subsequently used for ATP formation. It consists of a core antenna complex that captures photons, and an electron transfer chain that converts photonic excitation into a charge separation. The D1/D2 (PsbA/PsbD) reaction center heterodimer binds P680, the primary electron donor of PSII as well as several subsequent electron acceptors. This chain is Photosystem II protein D1, found in Adiantum capillus-veneris (Maidenhair fern).